The primary structure comprises 352 residues: B1 bradykinin receptor (352 aa).

The Extracellular segment spans residues 1 to 41 (MASWPPLELQSSNQSQLFPQNATACDNAPEAWDLLHRVLPT). Asn-13 and Asn-21 each carry an N-linked (GlcNAc...) asparagine glycan. A helical transmembrane segment spans residues 42 to 62 (FIISICSFGLLGNLFVLLVFL). Residues 63-72 (LPRRRLNVAE) are Cytoplasmic-facing. The chain crosses the membrane as a helical span at residues 73–93 (IYLANLAASDLVFVLGLPFWA). Residues 94-110 (ENIWNQFNWPFGALLCR) are Extracellular-facing. A disulfide bond links Cys-109 and Cys-188. A helical transmembrane segment spans residues 111–131 (VINGIIKANLFISIFLVVAIS). At 132–153 (QDRYCVLVHPMASRRRQRRRQA) the chain is on the cytoplasmic side. The helical transmembrane segment at 154-174 (RVTCVLIWVVGGLLSIPTFLL) threads the bilayer. The Extracellular portion of the chain corresponds to 175 to 206 (RSIQAVPDLNITACILLLPHEAWHFARIVELN). The N-linked (GlcNAc...) asparagine glycan is linked to Asn-184. The helical transmembrane segment at 207–227 (ILAFLLPLAAIIFFNYHILAS) threads the bilayer. Topologically, residues 228–250 (LRGREEVSRTRCGGSKDSKTTAL) are cytoplasmic. The helical transmembrane segment at 251-271 (ILTLVVAFLVCWAPYHFFAFL) threads the bilayer. Over 272 to 294 (EFLFQVQAVRGCFWEDFIDLGLQ) the chain is Extracellular. A helical transmembrane segment spans residues 295 to 315 (LANFLAFTNSSLNPVIYVFVG). The Cytoplasmic segment spans residues 316–352 (RLFRTKVWELYKQCTPKSLAPISSSHRKEIFQLFWRN). Cys-329 carries the S-palmitoyl cysteine lipid modification.

It belongs to the G-protein coupled receptor 1 family. Bradykinin receptor subfamily. BDKRB1 sub-subfamily.

The protein localises to the cell membrane. Its function is as follows. This is a receptor for bradykinin. Could be a factor in chronic pain and inflammation. This is B1 bradykinin receptor (BDKRB1) from Macaca mulatta (Rhesus macaque).